The following is a 734-amino-acid chain: Photosystem I P700 chlorophyll a apoprotein A2 (734 aa).

Helical transmembrane passes span 46–69 (IFASHFGQLAIIFLWTSGNLFHVA), 135–158 (LYTGALFLLFLSAISLIAGWLHLQ), 175–199 (LNHHLSGLFGVSSLAWTGHLVHVAI), 273–291 (IAHHHLAIAFIFLVAGHMY), 330–353 (LHFQLGLALASLGVITSLVAQHMY), 369–395 (AALYTHHQYIAGFIMTGAFAHGAILVI), 417–439 (AIISHLSWASLFLGFHTLGLYVH), and 517–535 (FLVHHAIALGLHTTTLILV). [4Fe-4S] cluster contacts are provided by Cys559 and Cys568. 2 consecutive transmembrane segments (helical) span residues 575-596 (AFYLAVFWMLNTIGWVTFYWHW) and 643-665 (LSVWAWMFLFGHLVWATGFMFLI). Residues His654, Met662, and Tyr670 each coordinate chlorophyll a. Trp671 lines the phylloquinone pocket. Residues 707-727 (LVGLAHFSVGYIFTYAAFLIA) form a helical membrane-spanning segment.

This sequence belongs to the PsaA/PsaB family. As to quaternary structure, the PsaA/B heterodimer binds the P700 chlorophyll special pair and subsequent electron acceptors. PSI consists of a core antenna complex that captures photons, and an electron transfer chain that converts photonic excitation into a charge separation. The eukaryotic PSI reaction center is composed of at least 11 subunits. Requires P700 is a chlorophyll a/chlorophyll a' dimer, A0 is one or more chlorophyll a, A1 is one or both phylloquinones and FX is a shared 4Fe-4S iron-sulfur center. as cofactor.

It localises to the plastid. It is found in the chloroplast thylakoid membrane. It carries out the reaction reduced [plastocyanin] + hnu + oxidized [2Fe-2S]-[ferredoxin] = oxidized [plastocyanin] + reduced [2Fe-2S]-[ferredoxin]. PsaA and PsaB bind P700, the primary electron donor of photosystem I (PSI), as well as the electron acceptors A0, A1 and FX. PSI is a plastocyanin-ferredoxin oxidoreductase, converting photonic excitation into a charge separation, which transfers an electron from the donor P700 chlorophyll pair to the spectroscopically characterized acceptors A0, A1, FX, FA and FB in turn. Oxidized P700 is reduced on the lumenal side of the thylakoid membrane by plastocyanin. The chain is Photosystem I P700 chlorophyll a apoprotein A2 from Atropa belladonna (Belladonna).